Consider the following 282-residue polypeptide: Protease HtpX homolog (282 aa).

2 helical membrane passes run Thr7–Gly26 and Gly30–Ser49. His131 contributes to the Zn(2+) binding site. Residue Glu132 is part of the active site. A Zn(2+)-binding site is contributed by His135. 2 consecutive transmembrane segments (helical) span residues Ile141–Ala161 and Leu183–Ile203. Residue Glu208 participates in Zn(2+) binding.

Belongs to the peptidase M48B family. The cofactor is Zn(2+).

It localises to the cell inner membrane. The chain is Protease HtpX homolog from Syntrophobacter fumaroxidans (strain DSM 10017 / MPOB).